Consider the following 138-residue polypeptide: Rapid alkalinization factor 23 (138 aa).

Positions 1 to 28 are cleaved as a signal peptide; the sequence is MRGLSRNSGAAAIFAILLILAVHNWSVA. The propeptide at 29–88 is removed in mature form; sequence VSSQSTEFAGDFPPFETECRGTIAECSVSAALGDGGDLFYGGGEMGEEFEMDSEINRRIL. Disulfide bonds link C106-C116 and C129-C135.

The protein belongs to the plant rapid alkalinization factor (RALF) family. Post-translationally, proteolytically cleaved, probably by SBT6.1 (S1P), a subtilisin-like serine protease (subtilase).

It is found in the secreted. In terms of biological role, cell signaling peptide that may regulate plant stress, growth, and development. Mediates a rapid alkalinization of extracellular space by mediating a transient increase in the cytoplasmic Ca(2+) concentration leading to a calcium-dependent signaling events through a cell surface receptor and a concomitant activation of some intracellular mitogen-activated protein kinases. Negatively regulates brassinolide (BL)-mediated signaling pathway (e.g. BL-induced hypocotyl elongation and branching limitation). The chain is Rapid alkalinization factor 23 (RALF23) from Arabidopsis thaliana (Mouse-ear cress).